The chain runs to 314 residues: Ferrochelatase (314 aa).

The Fe cation site is built by histidine 184 and glutamate 259.

Belongs to the ferrochelatase family.

Its subcellular location is the cytoplasm. It carries out the reaction heme b + 2 H(+) = protoporphyrin IX + Fe(2+). It functions in the pathway porphyrin-containing compound metabolism; protoheme biosynthesis; protoheme from protoporphyrin-IX: step 1/1. In terms of biological role, catalyzes the ferrous insertion into protoporphyrin IX. The polypeptide is Ferrochelatase (Chlamydia trachomatis serovar L2 (strain ATCC VR-902B / DSM 19102 / 434/Bu)).